The following is a 302-amino-acid chain: MSSRNLLYSSVVLFLVLFYCHGGPLEDRVRSTIQEVYKNCRKDKNPGVIVSVVKDGQNVLTEALGVKDKISGEAITTDTLFGLGGISALFANILIAKKNAEYAEMDEDTTLRNLFGNNKLFEKSKLRSRYATSLDVMAHRLGFKNTPHLFLDDTVTRGDPVIQRISSMKPRGRFRDSFYYNELTYSILTTIGERLGRDSWENLVKNEIYTPLGMAKSKFFTTLDPSTVDIARAYKEDDGSLFPVPFEFLKKWSSLCSTTCVLSSANDMSKFMNYLLGQRKPSWTKPCVTGPRKFTLILFDAI.

The first 22 residues, 1–22 (MSSRNLLYSSVVLFLVLFYCHG), serve as a signal peptide directing secretion. A helical membrane pass occupies residues 75-95 (ITTDTLFGLGGISALFANILI).

Component of the organic matrix of calcified shell layers.

The protein resides in the membrane. The polypeptide is Gigasin-6 (Magallana gigas (Pacific oyster)).